A 1124-amino-acid polypeptide reads, in one-letter code: Zinc finger E-box-binding homeobox 1 (1124 aa).

2 disordered regions span residues 1–124 (MADG…NHDP) and 142–163 (APEEDQRQGTPEASGHDENGTP). The segment covering 18-30 (NNVTNYNTVVETN) has biased composition (low complexity). Phosphoserine is present on residues Ser31 and Ser33. The span at 44-62 (EESVTDAADCEGVPEDDLP) shows a compositional bias: acidic residues. Residues 72-91 (SSEREGNAKNCWEDDRKEGQ) show a composition bias toward basic and acidic residues. Residues 170-193 (LTCPYCDRGYKRFTSLKEHIKYRH) form a C2H2-type 1 zinc finger. Residues Lys186 and Lys195 each participate in a glycyl lysine isopeptide (Lys-Gly) (interchain with G-Cter in SUMO2) cross-link. 2 consecutive C2H2-type zinc fingers follow at residues 200 to 222 (FSCSLCSYTFAYRTQLERHMTSH) and 240 to 262 (FKCTECGKAFKYKHHLKEHLRIH). A C2H2-type 4; atypical zinc finger spans residues 268-292 (YECPNCKKRFSHSGSYSSHISSKKC). The interval 304–327 (TGLKTSQCSSPSLSASPGSPTRPQ) is disordered. Residue Lys307 forms a Glycyl lysine isopeptide (Lys-Gly) (interchain with G-Cter in SUMO2) linkage. The segment covering 309–322 (SQCSSPSLSASPGS) has biased composition (low complexity). 2 positions are modified to phosphoserine: Ser313 and Ser322. Residues Lys331 and Lys335 each participate in a glycyl lysine isopeptide (Lys-Gly) (interchain with G-Cter in SUMO2) cross-link. A Glycyl lysine isopeptide (Lys-Gly) (interchain with G-Cter in SUMO); alternate cross-link involves residue Lys347. Lys347 participates in a covalent cross-link: Glycyl lysine isopeptide (Lys-Gly) (interchain with G-Cter in SUMO2); alternate. Residues Lys439, Lys493, Lys504, Lys515, Lys548, and Lys553 each participate in a glycyl lysine isopeptide (Lys-Gly) (interchain with G-Cter in SUMO2) cross-link. Disordered stretches follow at residues 551–586 (DLKQPTQPPPLPAAEAEKPESSVSSATGDGNLSPSQ) and 636–714 (QISV…SSSR). A DNA-binding region (homeobox; atypical) is located at residues 581-640 (NLSPSQPPLKNLLSLLKAYYALNAQPSAEELSKIADSVNLPLDVVKKWFEKMQAGQISVQ). Phosphoserine is present on residues Ser642, Ser679, Ser686, Ser693, and Ser700. Residues 656–687 (AKNNDQPQSANANEPQDSTVNLQSPLKMTNSP) are compositionally biased toward polar residues. Over residues 692–714 (GSTTNGSRSSTPSPSPLNLSSSR) the composition is skewed to low complexity. A Phosphothreonine modification is found at Thr702. Position 704 is a phosphoserine (Ser704). Lys774 is covalently cross-linked (Glycyl lysine isopeptide (Lys-Gly) (interchain with G-Cter in SUMO); alternate). Lys774 is covalently cross-linked (Glycyl lysine isopeptide (Lys-Gly) (interchain with G-Cter in SUMO2); alternate). The segment at 856–898 (PPLKVIQPNGNQDERQDTSSEGVSNVEDQNDSDSTPPKKKMRK) is disordered. Residues 874–890 (SSEGVSNVEDQNDSDST) are compositionally biased toward polar residues. C2H2-type zinc fingers lie at residues 904–926 (YACDLCDKIFQKSSSLLRHKYEH) and 932–954 (HECGICKKAFKHKHHLIEHMRLH). The C2H2-type 7; atypical zinc finger occupies 960-981 (YQCDKCGKRFSHSGSYSQHMNH). The disordered stretch occupies residues 989–1124 (EAEERDSTEQ…QVSEEKTNEA (136 aa)). Composition is skewed to acidic residues over residues 1031–1052 (EEDEDSEKEEEEEDKEMEELQE) and 1062–1084 (DEEEEEEEEEVEEEEVEEAENEG). Positions 1085-1099 (EEAKTEGLMKDDRAE) are enriched in basic and acidic residues. Polar residues predominate over residues 1100-1115 (SQASSLGQKVGESSEQ).

It belongs to the delta-EF1/ZFH-1 C2H2-type zinc-finger family. In terms of assembly, interacts (via N-terminus) with SMARCA4/BRG1. In terms of processing, ubiquitinated, leading to degradation in a proteasome-dependent manner. Deubiquitinated by USP51, leading to stabilization. As to expression, colocalizes with SMARCA4/BRG1 in E-cadherin-negative cells from established lines, and stroma of normal colon as well as in de-differentiated epithelial cells at the invasion front of colorectal carcinomas (at protein level). Expressed in heart and skeletal muscle, but not in liver, spleen, or pancreas.

It is found in the nucleus. Acts as a transcriptional repressor. Inhibits interleukin-2 (IL-2) gene expression. Enhances or represses the promoter activity of the ATP1A1 gene depending on the quantity of cDNA and on the cell type. Represses E-cadherin promoter and induces an epithelial-mesenchymal transition (EMT) by recruiting SMARCA4/BRG1. Represses BCL6 transcription in the presence of the corepressor CTBP1. Positively regulates neuronal differentiation. Represses RCOR1 transcription activation during neurogenesis. Represses transcription by binding to the E box (5'-CANNTG-3'). In the absence of TGFB1, acts as a repressor of COL1A2 transcription via binding to the E-box in the upstream enhancer region. This chain is Zinc finger E-box-binding homeobox 1, found in Homo sapiens (Human).